The following is a 179-amino-acid chain: Peptidyl-tRNA hydrolase (179 aa).

Tyrosine 14 is a tRNA binding site. Histidine 19 functions as the Proton acceptor in the catalytic mechanism. The tRNA site is built by tyrosine 60, asparagine 62, and asparagine 108.

Belongs to the PTH family. In terms of assembly, monomer.

Its subcellular location is the cytoplasm. The catalysed reaction is an N-acyl-L-alpha-aminoacyl-tRNA + H2O = an N-acyl-L-amino acid + a tRNA + H(+). Its function is as follows. Hydrolyzes ribosome-free peptidyl-tRNAs (with 1 or more amino acids incorporated), which drop off the ribosome during protein synthesis, or as a result of ribosome stalling. In terms of biological role, catalyzes the release of premature peptidyl moieties from peptidyl-tRNA molecules trapped in stalled 50S ribosomal subunits, and thus maintains levels of free tRNAs and 50S ribosomes. This Mycoplasma mobile (strain ATCC 43663 / 163K / NCTC 11711) (Mesomycoplasma mobile) protein is Peptidyl-tRNA hydrolase.